Here is a 1032-residue protein sequence, read N- to C-terminus: Protein translocase subunit SecA (1032 aa).

ATP is bound by residues Gln-121, 139–143 (GEGKT), and Asp-570. Positions 945-975 (TAGGSENATEDAPKPAKRGVGGAARRVSNAA) are disordered. Residues Cys-994, Cys-996, Cys-1005, and His-1006 each contribute to the Zn(2+) site.

Belongs to the SecA family. Monomer and homodimer. Part of the essential Sec protein translocation apparatus which comprises SecA, SecYEG and auxiliary proteins SecDF. Other proteins may also be involved. It depends on Zn(2+) as a cofactor.

The protein resides in the cell membrane. Its subcellular location is the cytoplasm. It carries out the reaction ATP + H2O + cellular proteinSide 1 = ADP + phosphate + cellular proteinSide 2.. Functionally, part of the Sec protein translocase complex. Interacts with the SecYEG preprotein conducting channel. Has a central role in coupling the hydrolysis of ATP to the transfer of proteins into and across the cell membrane, serving as an ATP-driven molecular motor driving the stepwise translocation of polypeptide chains across the membrane. This chain is Protein translocase subunit SecA, found in Herpetosiphon aurantiacus (strain ATCC 23779 / DSM 785 / 114-95).